We begin with the raw amino-acid sequence, 460 residues long: ATP synthase subunit beta (460 aa).

Position 150-157 (150-157) interacts with ATP; it reads GGAGVGKT.

It belongs to the ATPase alpha/beta chains family. As to quaternary structure, F-type ATPases have 2 components, CF(1) - the catalytic core - and CF(0) - the membrane proton channel. CF(1) has five subunits: alpha(3), beta(3), gamma(1), delta(1), epsilon(1). CF(0) has three main subunits: a(1), b(2) and c(9-12). The alpha and beta chains form an alternating ring which encloses part of the gamma chain. CF(1) is attached to CF(0) by a central stalk formed by the gamma and epsilon chains, while a peripheral stalk is formed by the delta and b chains.

The protein resides in the cell inner membrane. It catalyses the reaction ATP + H2O + 4 H(+)(in) = ADP + phosphate + 5 H(+)(out). Its function is as follows. Produces ATP from ADP in the presence of a proton gradient across the membrane. The catalytic sites are hosted primarily by the beta subunits. The sequence is that of ATP synthase subunit beta from Serratia proteamaculans (strain 568).